The following is a 149-amino-acid chain: Transcriptional repressor NrdR (149 aa).

The segment at 3 to 34 (CPYCSYEESKVVDSRSAEDYNAIRRRRECLRC) is a zinc-finger region. The ATP-cone domain occupies 49-139 (ILVIKKDLSR…VYRQFKDINT (91 aa)).

The protein belongs to the NrdR family. The cofactor is Zn(2+).

Its function is as follows. Negatively regulates transcription of bacterial ribonucleotide reductase nrd genes and operons by binding to NrdR-boxes. The polypeptide is Transcriptional repressor NrdR (Clostridium perfringens (strain ATCC 13124 / DSM 756 / JCM 1290 / NCIMB 6125 / NCTC 8237 / Type A)).